Here is a 517-residue protein sequence, read N- to C-terminus: Ribonuclease Y (517 aa).

The chain crosses the membrane as a helical span at residues 1–21; that stretch reads MIESLIALIAAIVGLGIGYLV. The KH domain occupies 207-273; the sequence is LINVINIKND…TKVIELLVED (67 aa). The HD domain maps to 333–426; it reads ALAHSLEVAH…VCAADTLSAA (94 aa).

This sequence belongs to the RNase Y family.

Its subcellular location is the cell membrane. Its function is as follows. Endoribonuclease that initiates mRNA decay. The chain is Ribonuclease Y from Campylobacter jejuni subsp. doylei (strain ATCC BAA-1458 / RM4099 / 269.97).